The following is a 323-amino-acid chain: MATSSSLFHPIEKELYSVEHNLKSVAGTRHPILYAAAKHLFEAGGKRLRPAIVLLVAKSTSEQQEIKPGQRRLAEITEIIHTASLVHDDVIDECSTRRGEKTVHKLFNTKIAVLAGDFLFAQSSWYLANIGNLEVVKVITKVITDFAEGEIRQGLVHFDPSISIDDYIEKSFYKTASLVAASCRGAAMLNDLNSQMHNDLYLYGKHMGLAFQIMDDVLDIAGSTKSLGKPSGADFMNGNLTAPILFALTQEGKLDQLIQREFSDERDISLALFLIKKSGGITKAKDLAKEQVQAALCCLQFLPKSAPVSSLKELTHFIITRLS.

Lysine 46, arginine 49, and histidine 81 together coordinate isopentenyl diphosphate. Residues aspartate 88 and aspartate 92 each coordinate Mg(2+). Arginine 97 contributes to the an all-trans-polyprenyl diphosphate binding site. Arginine 98 serves as a coordination point for isopentenyl diphosphate. An all-trans-polyprenyl diphosphate is bound by residues lysine 174, threonine 175, and glutamine 212.

Belongs to the FPP/GGPP synthase family. The cofactor is Mg(2+).

It localises to the plastid. The protein resides in the chloroplast. In terms of biological role, possible role in synthesis of the nonaprenyl side chain of plastoquinone or in synthesis of other prenyl chains such as undekaprenyl pyrophosphate. The polypeptide is Prenyl transferase (preA) (Porphyra purpurea (Red seaweed)).